The chain runs to 312 residues: Ornithine carbamoyltransferase (312 aa).

Residues 50 to 53, Gln77, Arg101, and 128 to 131 contribute to the carbamoyl phosphate site; these read STRT and HPCQ. L-ornithine-binding positions include Asn159, Asp223, and 227–228; that span reads SM. Residues 263–264 and Arg291 each bind carbamoyl phosphate; that span reads CL.

It belongs to the aspartate/ornithine carbamoyltransferase superfamily. OTCase family.

It localises to the cytoplasm. The catalysed reaction is carbamoyl phosphate + L-ornithine = L-citrulline + phosphate + H(+). Its pathway is amino-acid biosynthesis; L-arginine biosynthesis; L-arginine from L-ornithine and carbamoyl phosphate: step 1/3. Reversibly catalyzes the transfer of the carbamoyl group from carbamoyl phosphate (CP) to the N(epsilon) atom of ornithine (ORN) to produce L-citrulline. The chain is Ornithine carbamoyltransferase from Acidothermus cellulolyticus (strain ATCC 43068 / DSM 8971 / 11B).